Reading from the N-terminus, the 247-residue chain is Triosephosphate isomerase (247 aa).

8–10 (NWK) lines the substrate pocket. His-94 functions as the Electrophile in the catalytic mechanism. Glu-165 serves as the catalytic Proton acceptor. 2 residues coordinate substrate: Gly-171 and Ser-210.

It belongs to the triosephosphate isomerase family. As to quaternary structure, homodimer.

The protein localises to the cytoplasm. The enzyme catalyses D-glyceraldehyde 3-phosphate = dihydroxyacetone phosphate. It functions in the pathway carbohydrate biosynthesis; gluconeogenesis. It participates in carbohydrate degradation; glycolysis; D-glyceraldehyde 3-phosphate from glycerone phosphate: step 1/1. Involved in the gluconeogenesis. Catalyzes stereospecifically the conversion of dihydroxyacetone phosphate (DHAP) to D-glyceraldehyde-3-phosphate (G3P). In Aquifex aeolicus (strain VF5), this protein is Triosephosphate isomerase.